Reading from the N-terminus, the 276-residue chain is 3beta-hydroxysteroid dehydrogenase (276 aa).

Residues 70-71, N97, Y162, and K166 each bind NADP(+); that span reads DV. Residue Y162 is the Proton acceptor of the active site.

It belongs to the short-chain dehydrogenases/reductases (SDR) family.

It carries out the reaction 3-oxo-5beta-cholan-24-oate + NADPH + H(+) = isolithocholate + NADP(+). The catalysed reaction is 12alpha-hydroxy-3-oxo-5beta-cholan-24-oate + NADPH + H(+) = isodeoxycholate + NADP(+). The enzyme catalyses 12alpha-hydroxy-3-oxo-5beta-cholan-24-oate + NADH + H(+) = isodeoxycholate + NAD(+). It catalyses the reaction 7alpha,12alpha-dihydroxy-3-oxo-5beta-cholan-24-oate + NADPH + H(+) = isocholate + NADP(+). It carries out the reaction 3-oxochenodeoxycholate + NADPH + H(+) = isochenodeoxycholate + NADP(+). Involved in the modification of secondary bile acids into iso-bile acids (3beta-bile acids) via epimerization of the 3-OH group through a 3-oxo-intermediate. Catalyzes the reduction of 12-alpha-hydroxy-3-oxo-5-beta-cholan-24-oate (3-oxo-DCA) and 3-oxo-5-beta-cholan-24-oate (3-oxo-LCA) to yield isodeoxycholate (isoDCA) and isolithocholate (isoLCA), respectively. Is also able to catalyze the reduction of 3-dehydrocholate (3-oxo-CA or 7alpha,12alpha-dihydroxy-3-oxo-5beta-cholan-24-oate) and 7-alpha-hydroxy-3-oxo-5-beta-cholan-24-oate (3-oxo-CDCA), into isocholate (isoCA) and isochenodeoxycholate (isoCDCA), respectively. Accepts both NADPH and NADH as cosubstrates. The conversion of the abundant bile acid deoxycholate (DCA) into isoDCA by the gut bacterium R.gnavus favors the growth of the keystone commensal genus Bacteroides, since isoDCA is less cytotoxic than its parent compound, DCA; iso-bile acids have thus a potential role in modulating gut community composition. This is 3beta-hydroxysteroid dehydrogenase from Mediterraneibacter gnavus (strain ATCC 29149 / DSM 114966 / JCM 6515 / VPI C7-9) (Ruminococcus gnavus).